The sequence spans 150 residues: 3-dehydroquinate dehydratase (150 aa).

Residue Tyr-22 is the Proton acceptor of the active site. 3 residues coordinate substrate: Asn-73, His-79, and Asp-86. His-99 serves as the catalytic Proton donor. Residues Leu-100–Thr-101 and Arg-110 contribute to the substrate site.

This sequence belongs to the type-II 3-dehydroquinase family. In terms of assembly, homododecamer.

It carries out the reaction 3-dehydroquinate = 3-dehydroshikimate + H2O. Its pathway is metabolic intermediate biosynthesis; chorismate biosynthesis; chorismate from D-erythrose 4-phosphate and phosphoenolpyruvate: step 3/7. Functionally, catalyzes a trans-dehydration via an enolate intermediate. The protein is 3-dehydroquinate dehydratase of Desulforudis audaxviator (strain MP104C).